A 274-amino-acid chain; its full sequence is Type II restriction enzyme HgiBI (274 aa).

The protein belongs to the TdeIII type II restriction endonuclease family.

It carries out the reaction Endonucleolytic cleavage of DNA to give specific double-stranded fragments with terminal 5'-phosphates.. Its function is as follows. A P subtype restriction enzyme that recognizes the double-stranded sequence 5'-GGWCC-3' and cleaves after G-1. This system is less active than isoschizomeric RM.HgiEI. The protein is Type II restriction enzyme HgiBI of Herpetosiphon aurantiacus (Herpetosiphon giganteus).